Here is a 220-residue protein sequence, read N- to C-terminus: Ribose-5-phosphate isomerase A (220 aa).

Residues 28–31 (TGST), 81–84 (DGAD), and 94–97 (KGGG) contribute to the substrate site. The Proton acceptor role is filled by Glu103. Lys121 lines the substrate pocket.

The protein belongs to the ribose 5-phosphate isomerase family. In terms of assembly, homodimer.

The catalysed reaction is aldehydo-D-ribose 5-phosphate = D-ribulose 5-phosphate. The protein operates within carbohydrate degradation; pentose phosphate pathway; D-ribose 5-phosphate from D-ribulose 5-phosphate (non-oxidative stage): step 1/1. In terms of biological role, catalyzes the reversible conversion of ribose-5-phosphate to ribulose 5-phosphate. The chain is Ribose-5-phosphate isomerase A from Coxiella burnetii (strain CbuK_Q154) (Coxiella burnetii (strain Q154)).